We begin with the raw amino-acid sequence, 187 residues long: Epididymal-specific lipocalin-10 (187 aa).

The first 19 residues, 1 to 19, serve as a signal peptide directing secretion; sequence MRQGLLVLALVLVLVLVLA. Cys-90 and Cys-163 are oxidised to a cystine. N-linked (GlcNAc...) asparagine glycosylation is present at Asn-149. Lys-170 carries the post-translational modification N6-acetyllysine.

The protein belongs to the calycin superfamily. Lipocalin family.

The protein resides in the secreted. In terms of biological role, may play a role in male fertility. May act as a retinoid carrier protein within the epididymis. In Homo sapiens (Human), this protein is Epididymal-specific lipocalin-10 (LCN10).